A 258-amino-acid polypeptide reads, in one-letter code: Isoprenyl transferase 2 (258 aa).

The segment covering 1–18 (MNFPPIHPSTPKMTPPDL) has biased composition (pro residues). A disordered region spans residues 1 to 21 (MNFPPIHPSTPKMTPPDLDPQ). Residue D32 is part of the active site. D32 provides a ligand contact to Mg(2+). Substrate is bound by residues 33–36 (GNGR), W37, R45, H49, and 77–79 (STE). The Proton acceptor role is filled by N80. Residues W81, R83, R200, and 206 to 208 (RLS) each bind substrate. E219 serves as a coordination point for Mg(2+).

The protein belongs to the UPP synthase family. As to quaternary structure, homodimer. Requires Mg(2+) as cofactor.

Catalyzes the condensation of isopentenyl diphosphate (IPP) with allylic pyrophosphates generating different type of terpenoids. The protein is Isoprenyl transferase 2 of Nostoc sp. (strain PCC 7120 / SAG 25.82 / UTEX 2576).